We begin with the raw amino-acid sequence, 447 residues long: Nacrein (447 aa).

The first 17 residues, 1–17 (MYLHLTALCVVIPLCYG), serve as a signal peptide directing secretion. N-linked (GlcNAc...) asparagine glycosylation is present at Asn44. The region spanning 50–446 (AGFSYDRSIC…KNKVTVYKSF (397 aa)) is the Alpha-carbonic anhydrase domain. The Zn(2+) site is built by His149, His151, and His174. The tract at residues 218–329 (DEPDDEECKH…GENGHKHGCR (112 aa)) is disordered. The span at 224–236 (ECKHILKGHHPDN) shows a compositional bias: basic and acidic residues. The segment covering 237 to 321 (NENGNGDNGN…NNGENGNNGE (85 aa)) has biased composition (low complexity). Repeat copies occupy residues 242–244 (GDN), 245–247 (GNN), 248–250 (GYN), 251–253 (GDN), 254–256 (GNN), 257–259 (GDN), 260–262 (GNN), 263–265 (SYN), 266–268 (GDN), 269–271 (GNN), 272–274 (GVN), 275–277 (GNN), 278–280 (GYN), 281–283 (GDN), 284–286 (GNN), 287–289 (GDN), 290–292 (GNN), 293–295 (GYN), 296–298 (GDN), 299–301 (GNN), 302–304 (GDN), 305–307 (GNN), 308–310 (GEN), 311–313 (GNN), 314–316 (GEN), 317–318 (GN), and 320–322 (GEN). The tract at residues 242–322 (GDNGNNGYNG…NGENGNNGEN (81 aa)) is 27 X 3 AA approximate tandem repeats of G-X-N. N-linked (GlcNAc...) asparagine glycosylation is present at Asn261. 387–388 (TT) provides a ligand contact to substrate.

Belongs to the alpha-carbonic anhydrase family. Homooligomer; disulfide-linked. May also be disulfide-linked to insoluble organic matrix. The cofactor is Zn(2+). N-glycosylated. As to expression, expressed at whole regions of the mantle epithelium tissue. Is found in the aragonitic nacreous and calcitic prismatic and foliated layers.

It is found in the secreted. Its subcellular location is the extracellular space. The protein resides in the extracellular matrix. It carries out the reaction hydrogencarbonate + H(+) = CO2 + H2O. Functionally, acts as a negative regulator for calcification in the shells of mollusks. May function both as a calcium concentrator and as a carbonic anhydrase required for production of carbonate ions, which are assembled to CaCO(3) at mineralization sites. Is important for shell formation in both the calcitic prismatic layer and the aragonitic nacreous layer. In Pinctada fucata (Akoya pearl oyster), this protein is Nacrein.